The primary structure comprises 276 residues: MSIDSLPPLREVIERHDLMPKKSLGQNFLFDLNLTSKIARQAGDLRDQPVIEVGPGPGGLTRALLAQGAYVTAIERDDRCLEALAEIAAHYPGRLRIIAGDALEQDFTALFPEGPKPRIVANLPYNVGTQLLLNWLLVEPWPPFYSSMTLMFQREVAERIVAKPDSDHYGRLGVLAGWRTQAKIAFDVPPQAFTPPPKVMSSVVHIVPRETPLPCRAEALGQITQAAFGQRRKMLRQSLKSIGGAALLEKTGIDGTRRAETLSVEEFVALANACLP.

S-adenosyl-L-methionine-binding residues include Asn-27, Leu-29, Gly-54, Glu-75, Asp-101, and Asn-122.

Belongs to the class I-like SAM-binding methyltransferase superfamily. rRNA adenine N(6)-methyltransferase family. RsmA subfamily.

Its subcellular location is the cytoplasm. It catalyses the reaction adenosine(1518)/adenosine(1519) in 16S rRNA + 4 S-adenosyl-L-methionine = N(6)-dimethyladenosine(1518)/N(6)-dimethyladenosine(1519) in 16S rRNA + 4 S-adenosyl-L-homocysteine + 4 H(+). Specifically dimethylates two adjacent adenosines (A1518 and A1519) in the loop of a conserved hairpin near the 3'-end of 16S rRNA in the 30S particle. May play a critical role in biogenesis of 30S subunits. The sequence is that of Ribosomal RNA small subunit methyltransferase A from Brucella abortus (strain S19).